A 78-amino-acid polypeptide reads, in one-letter code: Large ribosomal subunit protein bL28 (78 aa).

Belongs to the bacterial ribosomal protein bL28 family.

The polypeptide is Large ribosomal subunit protein bL28 (Legionella pneumophila (strain Paris)).